The following is an 886-amino-acid chain: Chitin synthase 3 (886 aa).

2 disordered regions span residues 1–70 and 86–138; these read MQQG…YQTD and PYEP…AGGG. A compositionally biased stretch (basic and acidic residues) spans 7 to 17; it reads LDDRPYGRPEQ. A compositionally biased stretch (polar residues) spans 37–56; the sequence is PSDQLQLNAAQSVDNLSRNS. The N-linked (GlcNAc...) asparagine glycan is linked to Asn51. Residues 106 to 122 show a composition bias toward basic and acidic residues; that stretch reads YDHDDLRPMLPHQDSHA. An N-linked (GlcNAc...) asparagine glycan is attached at Asn196. Transmembrane regions (helical) follow at residues 428 to 448, 526 to 546, 556 to 576, 602 to 622, 637 to 657, 683 to 703, and 712 to 732; these read SAFGFISVLPGAFSAYRYVAL, RWLNGSFFAAIYAIAHFYQFF, VMLFIEFIFHTINMVFAWFAV, ILGVVFTWLYGVALFTCFVLS, MVYFWAIIMVYLMFAAIFIAV, TLIVSVMSTYGIWFLASFLMF, and FVQYMLLTPTYINILNVYAFC. The segment at 745 to 768 is disordered; that stretch reads DQAEKLPSVSTKDGSGKTDLPDES. Transmembrane regions (helical) follow at residues 813–833 and 858–878; these read VLAWMITNFGLAAVVLSAAGL and VVLWSVAGLAAFKFIGAMWFL.

The protein belongs to the chitin synthase family. Class I subfamily.

The protein localises to the cell membrane. It carries out the reaction [(1-&gt;4)-N-acetyl-beta-D-glucosaminyl](n) + UDP-N-acetyl-alpha-D-glucosamine = [(1-&gt;4)-N-acetyl-beta-D-glucosaminyl](n+1) + UDP + H(+). Its function is as follows. Polymerizes chitin, a structural polymer of the cell wall and septum, by transferring the sugar moiety of UDP-GlcNAc to the non-reducing end of the growing chitin polymer. Involved in tolerance to hyperosmotic conditions. CHS3 is the only V.dahliae chitin synthase that is not involved in virulence. The protein is Chitin synthase 3 of Verticillium dahliae (strain VdLs.17 / ATCC MYA-4575 / FGSC 10137) (Verticillium wilt).